Consider the following 548-residue polypeptide: Uridine-cytidine kinase-like 1 (548 aa).

Residues 1 to 18 are compositionally biased toward low complexity; that stretch reads MAAPPASMSAAPSPLQSA. The interval 1–74 is disordered; it reads MAAPPASMSA…CKSEPPLLRT (74 aa). Phosphoserine occurs at positions 56 and 63. Residue 105-112 participates in ATP binding; that stretch reads GGSASGKT. Serine 539 bears the Phosphoserine mark.

This sequence belongs to the uridine kinase family. As to quaternary structure, interacts with RNF19B. Post-translationally, ubiquitinated by RNF19B; which induces proteasomal degradation.

The protein localises to the cytoplasm. It is found in the nucleus. It catalyses the reaction uridine + ATP = UMP + ADP + H(+). It carries out the reaction cytidine + ATP = CMP + ADP + H(+). It functions in the pathway pyrimidine metabolism; UMP biosynthesis via salvage pathway; UMP from uridine: step 1/1. May contribute to UTP accumulation needed for blast transformation and proliferation. In Mus musculus (Mouse), this protein is Uridine-cytidine kinase-like 1 (Uckl1).